The chain runs to 126 residues: Holo-[acyl-carrier-protein] synthase (126 aa).

Residues D9 and E58 each contribute to the Mg(2+) site.

Belongs to the P-Pant transferase superfamily. AcpS family. Requires Mg(2+) as cofactor.

Its subcellular location is the cytoplasm. The enzyme catalyses apo-[ACP] + CoA = holo-[ACP] + adenosine 3',5'-bisphosphate + H(+). Its function is as follows. Transfers the 4'-phosphopantetheine moiety from coenzyme A to a Ser of acyl-carrier-protein. This Vibrio vulnificus (strain CMCP6) protein is Holo-[acyl-carrier-protein] synthase.